A 366-amino-acid chain; its full sequence is Gelsolin-like protein 2 (366 aa).

Gelsolin-like repeat units follow at residues 55–139, 177–252, and 286–327; these read NFKV…DLFL, KHIV…HEFY, and KSTV…AQEK. The actin binding stretch occupies residues 100 to 116; that stretch reads KSTQDEYCVAAYKTVEL. An actin-actin interfilament contact point region spans residues 104–107; it reads DEYC.

It belongs to the villin/gelsolin family. Interacts with actin monomers and filaments. Expressed in circular and longitudinal muscle, pseudohearts, pharynx and gizzard. Not expressed in seminal vesicles.

It localises to the cytoplasm. The protein localises to the cytoskeleton. In terms of biological role, calcium-regulated protein that binds to the plus (or barbed) ends of actin monomers or filaments, preventing monomer exchange (end-blocking or capping). Can promote the assembly of monomers into filaments (nucleation) as well as sever existing filaments. The protein is Gelsolin-like protein 2 of Lumbricus terrestris (Common earthworm).